The chain runs to 128 residues: Large ribosomal subunit protein bL12 (128 aa).

This sequence belongs to the bacterial ribosomal protein bL12 family. In terms of assembly, homodimer. Part of the ribosomal stalk of the 50S ribosomal subunit. Forms a multimeric L10(L12)X complex, where L10 forms an elongated spine to which 2 to 4 L12 dimers bind in a sequential fashion. Binds GTP-bound translation factors.

In terms of biological role, forms part of the ribosomal stalk which helps the ribosome interact with GTP-bound translation factors. Is thus essential for accurate translation. The polypeptide is Large ribosomal subunit protein bL12 (Kocuria rhizophila (strain ATCC 9341 / DSM 348 / NBRC 103217 / DC2201)).